The primary structure comprises 214 residues: Large ribosomal subunit protein uL16 (214 aa).

R32 carries the post-translational modification Citrulline. K175 is covalently cross-linked (Glycyl lysine isopeptide (Lys-Gly) (interchain with G-Cter in SUMO2)). A Glycyl lysine isopeptide (Lys-Gly) (interchain with G-Cter in ubiquitin) cross-link involves residue K188.

Belongs to the universal ribosomal protein uL16 family. As to quaternary structure, component of the large ribosomal subunit. Mature ribosomes consist of a small (40S) and a large (60S) subunit. The 40S subunit contains about 33 different proteins and 1 molecule of RNA (18S). The 60S subunit contains about 49 different proteins and 3 molecules of RNA (28S, 5.8S and 5S). Post-translationally, citrullinated by PADI4. Ufmylated by UFL1.

It is found in the cytoplasm. Its function is as follows. Component of the large ribosomal subunit. Plays a role in the formation of actively translating ribosomes. May play a role in the embryonic brain development. The polypeptide is Large ribosomal subunit protein uL16 (Bos taurus (Bovine)).